A 307-amino-acid polypeptide reads, in one-letter code: Elongation factor Ts (307 aa).

The interval 80–83 is involved in Mg(2+) ion dislocation from EF-Tu; sequence TDFV.

The protein belongs to the EF-Ts family.

It localises to the cytoplasm. In terms of biological role, associates with the EF-Tu.GDP complex and induces the exchange of GDP to GTP. It remains bound to the aminoacyl-tRNA.EF-Tu.GTP complex up to the GTP hydrolysis stage on the ribosome. In Variovorax paradoxus (strain S110), this protein is Elongation factor Ts.